The primary structure comprises 403 residues: Probable tRNA sulfurtransferase (403 aa).

The region spanning Gln60 to Thr165 is the THUMP domain. ATP is bound by residues Met183–Leu184, His208–Phe209, Arg265, Gly287, and Gln296.

Belongs to the ThiI family.

Its subcellular location is the cytoplasm. The catalysed reaction is [ThiI sulfur-carrier protein]-S-sulfanyl-L-cysteine + a uridine in tRNA + 2 reduced [2Fe-2S]-[ferredoxin] + ATP + H(+) = [ThiI sulfur-carrier protein]-L-cysteine + a 4-thiouridine in tRNA + 2 oxidized [2Fe-2S]-[ferredoxin] + AMP + diphosphate. It carries out the reaction [ThiS sulfur-carrier protein]-C-terminal Gly-Gly-AMP + S-sulfanyl-L-cysteinyl-[cysteine desulfurase] + AH2 = [ThiS sulfur-carrier protein]-C-terminal-Gly-aminoethanethioate + L-cysteinyl-[cysteine desulfurase] + A + AMP + 2 H(+). Its pathway is cofactor biosynthesis; thiamine diphosphate biosynthesis. Catalyzes the ATP-dependent transfer of a sulfur to tRNA to produce 4-thiouridine in position 8 of tRNAs, which functions as a near-UV photosensor. Also catalyzes the transfer of sulfur to the sulfur carrier protein ThiS, forming ThiS-thiocarboxylate. This is a step in the synthesis of thiazole, in the thiamine biosynthesis pathway. The sulfur is donated as persulfide by IscS. The protein is Probable tRNA sulfurtransferase of Listeria monocytogenes serotype 4b (strain CLIP80459).